The sequence spans 63 residues: Large ribosomal subunit protein bL33 (63 aa).

The protein belongs to the bacterial ribosomal protein bL33 family.

This is Large ribosomal subunit protein bL33 from Gloeobacter violaceus (strain ATCC 29082 / PCC 7421).